The primary structure comprises 212 residues: NADH-quinone oxidoreductase subunit I (212 aa).

2 consecutive 4Fe-4S ferredoxin-type domains span residues 76–105 (RLLE…IITD) and 115–144 (LNYS…HGDL). Residues C85, C88, C91, C95, C124, C127, C130, and C134 each coordinate [4Fe-4S] cluster.

It belongs to the complex I 23 kDa subunit family. As to quaternary structure, NDH-1 is composed of 14 different subunits. Subunits NuoA, H, J, K, L, M, N constitute the membrane sector of the complex. Requires [4Fe-4S] cluster as cofactor.

It localises to the cell inner membrane. The catalysed reaction is a quinone + NADH + 5 H(+)(in) = a quinol + NAD(+) + 4 H(+)(out). NDH-1 shuttles electrons from NADH, via FMN and iron-sulfur (Fe-S) centers, to quinones in the respiratory chain. The immediate electron acceptor for the enzyme in this species is believed to be ubiquinone. Couples the redox reaction to proton translocation (for every two electrons transferred, four hydrogen ions are translocated across the cytoplasmic membrane), and thus conserves the redox energy in a proton gradient. This Helicobacter hepaticus (strain ATCC 51449 / 3B1) protein is NADH-quinone oxidoreductase subunit I.